The primary structure comprises 251 residues: MKVHEFSNGFSSSWDQHDSTSSLSLSCKRLRPLAPKLSGSPPSPPSSSSGVTSATFDLKNFIRPDQTGPTKFEHKRDPPHQLETHPGGTRWNPTQEQIGILEMLYKGGMRTPNAQQIEHITLQLGKYGKIEGKNVFYWFQNHKARERQKQKRNNLISLSCQSSFTTTGVFNPSVTMKTRTSSSLDIMREPMVEKEELVEENEYKRTCRSWGFENLEIENRRNKNSSTMATTFNKIIDNVTLELFPLHPEGR.

Disordered stretches follow at residues 1-21 and 33-93; these read MKVH…DSTS and LAPK…RWNP. Low complexity predominate over residues 11 to 21; the sequence is SSSWDQHDSTS. Residues 71-83 show a composition bias toward basic and acidic residues; sequence KFEHKRDPPHQLE. The homeobox; WUS-type DNA-binding region spans 86–150; it reads PGGTRWNPTQ…NHKARERQKQ (65 aa).

The protein belongs to the WUS homeobox family. As to expression, expressed in the vasculature of the whole plant (roots, hypocotyls, cotyledons and leaves), trichomes and stomata. Expresse in the developing vascular bundles of root and shoot lateral organs.

The protein localises to the nucleus. Promotes differentiation and/or maintenance of the vascular procambium, the initial cells of the developing vasculature. Part of the TDIF-TDR-WOX4 signaling pathway that plays a crucial role in the maintenance of the vascular meristem organization during secondary growth. Is required for promoting the proliferation of procambial/cambial stem cells but not for repressing their commitment to xylem differentiation in response to the TDIF signal. Acts redundantly with WOX14 downstream of the TDR/PXY receptor kinase to regulate procambial cell proliferation and differentiation in vascular tissue, independently of any role in vascular. Acts as a cambium regulator in the inflorescence stem. Is required for auxin-dependent cambium stimulation in the inflorescence stem. The sequence is that of WUSCHEL-related homeobox 4 (WOX4) from Arabidopsis thaliana (Mouse-ear cress).